The sequence spans 800 residues: MSSGDSNLKRRRGGNTGQSSKSYNTWTDYEEDLEESGEFNQSIKKTTNTSSATLTSSEEKGSLLDYSKRCILKQDNKSRPIWVCPDGHIFLETFSAIYKQASDFLVAIAEPVCRPQNIHEYQLTPYSLYAAVSVGLETNDIITVLGRLSKLALPKEVEQFVRQCTQSYGKVKLVLQKNKYFVESAYPEVLEFLLKDSSIATARIKPTLEESVVDPKTGFIINKEVVTGAQISGGLQANQSLDPVLKNDALSNLLEEEEEDTVNNSDQHFHSFEIDPQQVEEVKKRCIQLDYPVLEEYDFRNDTVNPNLNIDLKPTTMIRPYQEKSLSKMFGNGRARSGIIVLPCGAGKSLSGITAACTVKKSILVLCTSAVSVEQWKYQFKLWSNIEERQISKFTSDNKEKISNVAGVTITTYTMVAFGGRRSAESLKIMNEITNREWGLVLLDEVHVVPAAMFRKVLTVTKAHCKLGLTATLLREDEKIQDLNFLIGPKLYEANWLDLQKAGFLANVSCSEVWCPMTAEFYKEYLINDSQGKKKLLYTMNPNKFRACEYLIRFHEQRGDKIIVFSDNVYALQKYAKGLGRYFIYGPTSGHERMSILSKFQHDPTVRTIFISKVGDTSIDIPEATVIIQVSSHYGSRRQEAQRLGRILRPKPKSDGLYNAFFYSLVSKDTQEMYYSTKRQQFLIDQGYSFKVISELPGIDQEVNLKYSSKQDQLDLLAQVLGEGEDSGKNEILEEDFDDITRGAKKSKSSAPTVSRTTGGSTRALSGGNDMNYMEYQAPAIYKSIPTQHALFKQRAKNKQ.

The segment at 1–27 (MSSGDSNLKRRRGGNTGQSSKSYNTWT) is disordered. A compositionally biased stretch (polar residues) spans 17 to 27 (GQSSKSYNTWT). A Helicase ATP-binding domain is found at 329-491 (MFGNGRARSG…DLNFLIGPKL (163 aa)). 342 to 349 (LPCGAGKS) lines the ATP pocket. Positions 444 to 447 (DEVH) match the DEVH box motif. The region spanning 546 to 704 (RACEYLIRFH…ELPGIDQEVN (159 aa)) is the Helicase C-terminal domain. The tract at residues 743 to 769 (GAKKSKSSAPTVSRTTGGSTRALSGGN) is disordered. Positions 749–764 (SSAPTVSRTTGGSTRA) are enriched in polar residues.

It belongs to the helicase family. RAD25/XPB subfamily. As to quaternary structure, component of the 7-subunit TFIIH core complex composed of XPB/repB, XPD/repD, gtf2h1, gtf2h2, gtf2h3, gtf2h4 and gtf2h5, which is active in NER. The core complex associates with the 3-subunit CDK-activating kinase (CAK) module composed of cycH/cyclin H, cdk7 and mnat1 to form the 10-subunit holoenzyme (holo-TFIIH) active in transcription.

The protein resides in the nucleus. It catalyses the reaction Couples ATP hydrolysis with the unwinding of duplex DNA by translocating in the 3'-5' direction.. It carries out the reaction ATP + H2O = ADP + phosphate + H(+). Functionally, ATP-dependent 3'-5' DNA helicase/translocase; binds dsDNA rather than ssDNA, unzipping it in a translocase rather than classical helicase activity. Component of the general transcription and DNA repair factor IIH (TFIIH) core complex. When complexed to CDK-activating kinase (CAK), involved in RNA transcription by RNA polymerase II. The ATPase activity of XPB/ERCC3, but not its helicase activity, is required for DNA opening; it may wrap around the damaged DNA wedging it open, causing localized melting and twisting that allows XPD/ERCC2 helicase to anchor. The ATP-dependent helicase activity of XPB/ERCC3 may be required for promoter escape. Also involved in transcription-coupled nucleotide excision repair (NER) of damaged DNA. In NER, TFIIH acts by opening DNA around the lesion to allow the excision of the damaged oligonucleotide and its replacement by a new DNA fragment. The structure of the TFIIH transcription complex differs from the NER-TFIIH complex. In Dictyostelium discoideum (Social amoeba), this protein is General transcription and DNA repair factor IIH helicase/translocase subunit XPB.